A 97-amino-acid chain; its full sequence is Putative membrane protein insertion efficiency factor (97 aa).

The protein belongs to the UPF0161 family.

The protein resides in the cell membrane. Could be involved in insertion of integral membrane proteins into the membrane. The sequence is that of Putative membrane protein insertion efficiency factor from Lactobacillus johnsonii (strain CNCM I-12250 / La1 / NCC 533).